We begin with the raw amino-acid sequence, 272 residues long: Transcription factor E2F6 (272 aa).

Residues 1–62 (MSQQRTARRQ…MRKALKVKRP (62 aa)) form a binding to corepressors region. Residues 50–129 (YVSMRKALKV…SKNHIRWIGS (80 aa)) mediate DNA binding. Positions 95–129 (KLGVRKRRVYDITNVLDGIELVEKKSKNHIRWIGS) match the DEF box motif. A dimerization region spans residues 130–222 (DLNNFGAAPQ…PAPREDSITV (93 aa)). A leucine-zipper region spans residues 143–164 (LQAELSDLSAMEDALDELIKDC). The tract at residues 173–272 (DDKENERLAY…CPEKEDEPPQ (100 aa)) is transcription repression. A disordered region spans residues 242–272 (HSNGKTNDGIGASPSKSSHPQCPEKEDEPPQ).

This sequence belongs to the E2F/DP family. As to quaternary structure, forms heterodimers with DP family members TFDP1 or TFDP2. Component of the DRTF1/E2F transcription factor complex. Part of the E2F6.com-1 complex in G0 phase composed of E2F6, MGA, MAX, TFDP1, CBX3, BAT8, EUHMTASE1, RING1, RNF2, MBLR, L3MBTL2 and YAF2. Component of some MLL1/MLL complex, at least composed of the core components KMT2A/MLL1, ASH2L, HCFC1/HCF1, WDR5 and RBBP5, as well as the facultative components BACC1, CHD8, E2F6, HSP70, INO80C, KANSL1, LAS1L, MAX, MCRS1, MGA, KAT8/MOF, PELP1, PHF20, PRP31, RING2, RUVB1/TIP49A, RUVB2/TIP49B, SENP3, TAF1, TAF4, TAF6, TAF7, TAF9 and TEX10.

Its subcellular location is the nucleus. Its function is as follows. Inhibitor of E2F-dependent transcription. Binds DNA cooperatively with DP proteins through the E2 recognition site, 5'-TTTC[CG]CGC-3'. Has a preference for the 5'-TTTCCCGC-3' E2F recognition site. E2F6 lacks the transcriptional activation and pocket protein binding domains. Appears to regulate a subset of E2F-dependent genes whose products are required for entry into the cell cycle but not for normal cell cycle progression. Represses expression of some meiosis-specific genes, including SLC25A31/ANT4. May silence expression via the recruitment of a chromatin remodeling complex containing histone H3-K9 methyltransferase activity. Overexpression delays the exit of cells from the S-phase. This Mus musculus (Mouse) protein is Transcription factor E2F6.